The following is a 91-amino-acid chain: Putative membrane protein insertion efficiency factor (91 aa).

The protein belongs to the UPF0161 family.

The protein localises to the cell inner membrane. Its function is as follows. Could be involved in insertion of integral membrane proteins into the membrane. The polypeptide is Putative membrane protein insertion efficiency factor (Saccharophagus degradans (strain 2-40 / ATCC 43961 / DSM 17024)).